Reading from the N-terminus, the 314-residue chain is Thymidylate synthase (314 aa).

DUMP is bound by residues Arg-21 and 176 to 177; that span reads RR. Cys-196 acts as the Nucleophile in catalysis. DUMP contacts are provided by residues 216 to 219, Asn-227, and 257 to 259; these read RSAD and HLY. Asp-219 lines the (6R)-5,10-methylene-5,6,7,8-tetrahydrofolate pocket. Ser-313 contributes to the (6R)-5,10-methylene-5,6,7,8-tetrahydrofolate binding site.

This sequence belongs to the thymidylate synthase family. Bacterial-type ThyA subfamily. As to quaternary structure, homodimer.

It localises to the cytoplasm. The enzyme catalyses dUMP + (6R)-5,10-methylene-5,6,7,8-tetrahydrofolate = 7,8-dihydrofolate + dTMP. It functions in the pathway pyrimidine metabolism; dTTP biosynthesis. In terms of biological role, catalyzes the reductive methylation of 2'-deoxyuridine-5'-monophosphate (dUMP) to 2'-deoxythymidine-5'-monophosphate (dTMP) while utilizing 5,10-methylenetetrahydrofolate (mTHF) as the methyl donor and reductant in the reaction, yielding dihydrofolate (DHF) as a by-product. This enzymatic reaction provides an intracellular de novo source of dTMP, an essential precursor for DNA biosynthesis. This chain is Thymidylate synthase, found in Listeria monocytogenes serotype 4b (strain F2365).